Reading from the N-terminus, the 334-residue chain is L-lactate dehydrogenase C chain (334 aa).

NAD(+) is bound by residues 30–58 (GQVG…VEDK) and arginine 100. The substrate site is built by arginine 107, asparagine 139, and arginine 170. Asparagine 139 is an NAD(+) binding site. Histidine 194 functions as the Proton acceptor in the catalytic mechanism. Threonine 249 provides a ligand contact to substrate.

This sequence belongs to the LDH/MDH superfamily. LDH family. As to quaternary structure, homotetramer. As to expression, eye and liver.

It is found in the cytoplasm. It carries out the reaction (S)-lactate + NAD(+) = pyruvate + NADH + H(+). Its pathway is fermentation; pyruvate fermentation to lactate; (S)-lactate from pyruvate: step 1/1. In Fundulus heteroclitus (Killifish), this protein is L-lactate dehydrogenase C chain (ldhc).